A 356-amino-acid chain; its full sequence is Phosphoserine aminotransferase (356 aa).

Residue Arg-41 participates in L-glutamate binding. Residues Ala-75–Thr-76, Trp-100, Thr-147, Asp-166, and Gln-189 each bind pyridoxal 5'-phosphate. At Lys-190 the chain carries N6-(pyridoxal phosphate)lysine. Asn-227–Thr-228 contributes to the pyridoxal 5'-phosphate binding site.

It belongs to the class-V pyridoxal-phosphate-dependent aminotransferase family. SerC subfamily. Homodimer. The cofactor is pyridoxal 5'-phosphate.

The protein resides in the cytoplasm. The catalysed reaction is O-phospho-L-serine + 2-oxoglutarate = 3-phosphooxypyruvate + L-glutamate. The enzyme catalyses 4-(phosphooxy)-L-threonine + 2-oxoglutarate = (R)-3-hydroxy-2-oxo-4-phosphooxybutanoate + L-glutamate. It functions in the pathway amino-acid biosynthesis; L-serine biosynthesis; L-serine from 3-phospho-D-glycerate: step 2/3. Catalyzes the reversible conversion of 3-phosphohydroxypyruvate to phosphoserine and of 3-hydroxy-2-oxo-4-phosphonooxybutanoate to phosphohydroxythreonine. In Exiguobacterium sp. (strain ATCC BAA-1283 / AT1b), this protein is Phosphoserine aminotransferase.